The chain runs to 487 residues: Betaine aldehyde dehydrogenase (487 aa).

2 residues coordinate K(+): Ile27 and Asp93. Residue 149-151 (GAW) coordinates NAD(+). The active-site Charge relay system is the Lys161. Residues 175-178 (KPSE) and 228-231 (SVPT) each bind NAD(+). Leu243 serves as a coordination point for K(+). Glu249 functions as the Proton acceptor in the catalytic mechanism. 3 residues coordinate NAD(+): Gly251, Cys283, and Glu384. Cys283 serves as the catalytic Nucleophile. Cys283 is modified (cysteine sulfenic acid (-SOH)). K(+) contacts are provided by Lys454 and Gly457. Glu461 functions as the Charge relay system in the catalytic mechanism.

It belongs to the aldehyde dehydrogenase family. As to quaternary structure, dimer of dimers. It depends on K(+) as a cofactor.

The catalysed reaction is betaine aldehyde + NAD(+) + H2O = glycine betaine + NADH + 2 H(+). Its pathway is amine and polyamine biosynthesis; betaine biosynthesis via choline pathway; betaine from betaine aldehyde: step 1/1. Involved in the biosynthesis of the osmoprotectant glycine betaine. Catalyzes the irreversible oxidation of betaine aldehyde to the corresponding acid. This chain is Betaine aldehyde dehydrogenase, found in Brucella canis (strain ATCC 23365 / NCTC 10854 / RM-666).